The chain runs to 253 residues: Imidazole glycerol phosphate synthase subunit HisF (253 aa).

Residues Asp-11 and Asp-130 contribute to the active site.

Belongs to the HisA/HisF family. In terms of assembly, heterodimer of HisH and HisF.

It localises to the cytoplasm. The catalysed reaction is 5-[(5-phospho-1-deoxy-D-ribulos-1-ylimino)methylamino]-1-(5-phospho-beta-D-ribosyl)imidazole-4-carboxamide + L-glutamine = D-erythro-1-(imidazol-4-yl)glycerol 3-phosphate + 5-amino-1-(5-phospho-beta-D-ribosyl)imidazole-4-carboxamide + L-glutamate + H(+). Its pathway is amino-acid biosynthesis; L-histidine biosynthesis; L-histidine from 5-phospho-alpha-D-ribose 1-diphosphate: step 5/9. IGPS catalyzes the conversion of PRFAR and glutamine to IGP, AICAR and glutamate. The HisF subunit catalyzes the cyclization activity that produces IGP and AICAR from PRFAR using the ammonia provided by the HisH subunit. This chain is Imidazole glycerol phosphate synthase subunit HisF, found in Clostridium botulinum (strain 657 / Type Ba4).